We begin with the raw amino-acid sequence, 1238 residues long: Virulence sensor protein BvgS (1238 aa).

The signal sequence occupies residues 1 to 32 (MPAPHRLYPRSLICLAQALLVWALLAWAPAQA). Residues 33 to 307 (SQELTLVGKA…REQQWMANHP (275 aa)) lie on the Cytoplasmic side of the membrane. Residues 308-331 (VVKVAVLNLFAPFTLFRTDEQFGG) traverse the membrane as a helical segment. The Periplasmic segment spans residues 332–541 (ISAAVLQLLQ…PRTWYAYRNE (210 aa)). A helical membrane pass occupies residues 542–563 (IYLLIGLGLLSALLFLSWIVYL). The Cytoplasmic portion of the chain corresponds to 564-1238 (RRQIRQRKRA…LEQRPHQGQP (675 aa)). Residues 580–651 (QLEFMRVLID…MHEFLLTRMA (72 aa)) form the PAS domain. The 57-residue stretch at 652–708 (AEREPRFEDRDVTLHGRTRHVYQWTVPYGDSLGELKGIIGGWIDITERAELLRELHD) folds into the PAC domain. In terms of domain architecture, Histidine kinase spans 726-948 (TMSHEIRTPM…TVSVDLRLTM (223 aa)). Residue H729 is modified to Phosphohistidine; by autocatalysis. Residues 974-1095 (RVLVVDDHKP…ALRQRLNEAA (122 aa)) enclose the Response regulatory domain. The residue at position 1023 (D1023) is a 4-aspartylphosphate. The region spanning 1133 to 1228 (DEALIRQLLE…AALETQLRAW (96 aa)) is the HPt domain. H1172 is modified (phosphohistidine).

In terms of processing, activation requires a sequential transfer of a phosphate group from a His in the primary transmitter domain, to an Asp in the receiver domain and to a His in the secondary transmitter domain.

It is found in the cell inner membrane. It carries out the reaction ATP + protein L-histidine = ADP + protein N-phospho-L-histidine.. In terms of biological role, member of the two-component regulatory system BvgS/BvgA. Phosphorylates BvgA via a four-step phosphorelay in response to environmental signals. The sequence is that of Virulence sensor protein BvgS (bvgS) from Bordetella parapertussis (strain 12822 / ATCC BAA-587 / NCTC 13253).